Here is an 841-residue protein sequence, read N- to C-terminus: Putative helicase R592 (841 aa).

The Helicase ATP-binding domain occupies 72 to 309 (STFVIETNSA…RRYVNKIFGQ (238 aa)). An ATP-binding site is contributed by 85-92 (DKVGAGKT). Residues 195-205 (KLPVKTTKKGG) are compositionally biased toward basic residues. Residues 195–215 (KLPVKTTKKGGSKTQNKAQND) form a disordered region. Residues 206 to 215 (SKTQNKAQND) show a composition bias toward polar residues. The DEAD box signature appears at 266–269 (DEMD). The stretch at 413–450 (QDVDAHENRKKNIMNNIARCKTKLESIKEKINSIKDEC) forms a coiled coil. The RING-type; degenerate zinc finger occupies 451-491 (CFICTDPFENPTIMNCCKSIFCLKCLLTTLKTVGSKCPYCR). In terms of domain architecture, Helicase C-terminal spans 531–682 (VLEQVLSYIS…WMITNPTDLN (152 aa)). The disordered stretch occupies residues 678-841 (PTDLNEEPDE…KAPVRKLIKV (164 aa)). A compositionally biased stretch (acidic residues) spans 681–697 (LNEEPDEESDEGSDEDV). Residues 698 to 725 (EKSKDKKSSDKKSSDKKKSEKKSSDKKS) are compositionally biased toward basic and acidic residues. The span at 726–749 (SNKKNSKKKTYVKPKSSKKTSQKV) shows a compositional bias: basic residues. Composition is skewed to acidic residues over residues 765–774 (DSDDLDDSDD) and 782–804 (SDSD…ESEI). 2 stretches are compositionally biased toward basic residues: residues 809-821 (KSKK…KKNK) and 828-841 (TLKK…LIKV).

The chain is Putative helicase R592 from Acanthamoeba polyphaga mimivirus (APMV).